A 616-amino-acid polypeptide reads, in one-letter code: DNA-binding protein RFX5 (616 aa).

Residues 1–29 (MAEDEPDAKSPKTGGRAPPGGAEAGEPTT) form a disordered region. An N-acetylalanine modification is found at alanine 2. Serine 10 carries the phosphoserine modification. Residues 13–29 (TGGRAPPGGAEAGEPTT) are compositionally biased toward low complexity. The tract at residues 25-90 (GEPTTLLQRL…PSTLSNEEYM (66 aa)) is N-terminal domain. Residues 62 to 66 (LYLYL) are leucine-rich region; critical for dimer formation and for interaction with RFXAP. Residues 92-168 (AYRWIRNHLE…YCYSGIRRKT (77 aa)) constitute a DNA-binding region (RFX-type winged-helix). Positions 173–178 (PPLPGL) match the PxLPxI/L motif; mediates interaction with RFXANK motif. A Phosphoserine modification is found at serine 185. Disordered regions lie at residues 252–314 (AEED…ESSA) and 391–616 (LPGP…ATPP). Residues 276 to 293 (GAHKKPERLAQPPKDLEA) show a composition bias toward basic and acidic residues. Residues 391–401 (LPGPGPGPGRA) show a composition bias toward pro residues. Positions 424 to 434 (GPHDKGVKRTA) are enriched in basic and acidic residues. Positions 463-473 (KRKRGRPRKKS) are enriched in basic residues. The segment covering 534–546 (QGDGTVSKGGRGP) has biased composition (gly residues). A compositionally biased stretch (basic and acidic residues) spans 606–616 (QEHKDPKATPP).

This sequence belongs to the RFX family. In terms of assembly, homodimer. The RFX heterotetrameric complex consists of 2 molecules of RFX5 and one each of RFXAP and RFX-B/RFXANK; with each subunit representing a separate complementation group. Interacts (via PxLPxI/L motif) with RFXANK (via ankyrin repeats); the interaction is direct. RFX forms cooperative DNA binding complexes with X2BP and CBF/NF-Y. RFX associates with CIITA to form an active transcriptional complex. Post-translationally, phosphorylated. As to expression, ubiquitous.

Its subcellular location is the nucleus. Activates transcription from class II MHC promoters. Recognizes X-boxes. Mediates cooperative binding between RFX and NF-Y. RFX binds the X1 box of MHC-II promoters. This is DNA-binding protein RFX5 (RFX5) from Homo sapiens (Human).